The primary structure comprises 102 residues: Small ribosomal subunit protein uS10 (102 aa).

This sequence belongs to the universal ribosomal protein uS10 family. Part of the 30S ribosomal subunit.

In terms of biological role, involved in the binding of tRNA to the ribosomes. In Thermococcus kodakarensis (strain ATCC BAA-918 / JCM 12380 / KOD1) (Pyrococcus kodakaraensis (strain KOD1)), this protein is Small ribosomal subunit protein uS10.